The chain runs to 579 residues: MANIGGSNAVSSAQGSQISDSPTTVDDRLDEHKETSTQSIDHSENITQSPTSLQKPPDESNATPVGFGEDGCQSDSQEYPNSWRLAAIMIGVCLAVFSMALDNTILATAIPKITDQFTSLGDVGWYGSVYPLTNCCLTLVFGKLYTFYSTKWVYLSALAVFEIGSLICGATPSSLGLIIGRAIAGLGSSGIYLGSMIILSQSVPLQKRPLFTSLVGGLYGVAGVAGPLLGGAFTDYVSWRWCFYINPLFGAVTALFILLFFDGKEPIKSPGKIKEQISQFDLIGLFFFLPGMISLLLALQWGGQQYNWQSGRIIGLFVCSICLLSIFIMVQWRQKEKATVTLRMIKNKNVWGASLFNFCITGSFLVFSYYLPVWFQSIKNVSATKSGLMNLPMLLGVILCSIISGYGVGRIGYYTPFMYAAPIVSAIGAGLLSTFQANFGPSQWIGYQALYGIGLGLGLSQPIVVIQAAIPLIDIPSAIAIVTFIQSLGGSVSVSIAQNVFRNELLRGLAQNAPKVDAHKLITAGPTTLRYVVPAELLERVLVAYNSAITHAFYVGAAFSVLAMIGALPIQWISVKGRE.

Over residues Met-1 to Thr-24 the composition is skewed to polar residues. The tract at residues Met-1–Asp-75 is disordered. Over residues Val-25–Thr-35 the composition is skewed to basic and acidic residues. Positions Ser-36–Gln-54 are enriched in polar residues. Asn-45 carries N-linked (GlcNAc...) asparagine glycosylation. 9 helical membrane-spanning segments follow: residues Leu-85 to Ile-105, Gly-121 to Phe-141, Ala-159 to Ile-179, Ile-183 to Val-203, Leu-214 to Thr-234, Trp-241 to Phe-261, Leu-282 to Gly-302, Ser-310 to Val-330, and Leu-355 to Phe-375. An N-linked (GlcNAc...) asparagine glycan is attached at Asn-380. The next 5 membrane-spanning stretches (helical) occupy residues Leu-388 to Val-408, Ile-411 to Leu-431, Phe-439 to Leu-459, Ile-479 to Phe-501, and Phe-553 to Ile-573.

It belongs to the major facilitator superfamily. TCR/Tet family.

Its subcellular location is the peroxisome membrane. Functionally, MFS-type transporter; part of the gene cluster that mediates the biosynthesis of 15-deoxyoxalicine B. The first step of the pathway is the synthesis of nicotinyl-CoA from nicotinic acid by the nicotinic acid-CoA ligase olcI. Nicotinyl-CoA is then a substrate of polyketide synthase olcA to produce 4-hydroxy-6-(3-pyridinyl)-2H-pyran-2-one (HPPO) which is further prenylated by the polyprenyl transferase olcH to yield geranylgeranyl-HPPO. Geranylgeranyl pyrophosphate is provided by the cluster-specific geranylgeranyl pyrophosphate synthase olcC. The FAD-dependent monooxygenase olcE catalyzes the epoxidation of geranylgeranyl-HPPO and the terpene cyclase olcD catalyzes the cyclization of the terpenoid component, resulting in the formation of the tricyclic terpene moiety seen in predecaturin E. The cytochrome P450 monooxygenase then catalyzes the allylic oxidation of predecaturin E, which is followed by spirocylization with concomitant loss of one molecule of water to form decaturin E. Decaturin E is the substrate of the cytochrome P450 monooxygenase olcJ which hydroxylates it at the C-29 position to form decaturin F. The short-chain dehydrogenase/reductase olcF may catalyze the oxidation of decaturin F to generate the 29-hydroxyl-27-one intermediate, and subsequent hemiacetal formation probably leads to the formation of decaturin C. The dioxygenase olcK may be a peroxisomal enzyme that catalyzes the hydroxylation of decaturin C into decaturin A once decaturin C is shuttled into the peroxisome by the MFS transporter olcL. Finally the cytochrome P450 monooxygenase olcB catalyzes the oxidative rearrangement to yield 15-deoxyoxalicine B. In the absence of olcJ, decaturin E may be shunted to a pathway in which it is oxidized to a ketone, possibly by olcF, to form decaturin D, which undergoes further allylic oxidation to yield decaturin G. Moreover, in the absence of oclK or oclL, oclB can convert decaturin C into 15-deoxyoxalicine A. This chain is MFS-type transporter olcL, found in Penicillium canescens.